Here is a 429-residue protein sequence, read N- to C-terminus: Enolase (429 aa).

Position 163 (Gln-163) interacts with (2R)-2-phosphoglycerate. The Proton donor role is filled by Glu-205. Asp-242, Glu-285, and Asp-312 together coordinate Mg(2+). Lys-337, Arg-366, Ser-367, and Lys-388 together coordinate (2R)-2-phosphoglycerate. Lys-337 (proton acceptor) is an active-site residue.

This sequence belongs to the enolase family. Component of the RNA degradosome, a multiprotein complex involved in RNA processing and mRNA degradation. It depends on Mg(2+) as a cofactor.

It is found in the cytoplasm. The protein resides in the secreted. It localises to the cell surface. It catalyses the reaction (2R)-2-phosphoglycerate = phosphoenolpyruvate + H2O. It participates in carbohydrate degradation; glycolysis; pyruvate from D-glyceraldehyde 3-phosphate: step 4/5. Catalyzes the reversible conversion of 2-phosphoglycerate (2-PG) into phosphoenolpyruvate (PEP). It is essential for the degradation of carbohydrates via glycolysis. This chain is Enolase, found in Alkalilimnicola ehrlichii (strain ATCC BAA-1101 / DSM 17681 / MLHE-1).